Reading from the N-terminus, the 469-residue chain is uncharacterized protein (469 aa).

Disordered stretches follow at residues 248–314 and 327–418; these read RDDN…EPES and QMDQ…PRPT. Polar residues-rich tracts occupy residues 292–305 and 350–365; these read ESSN…NAAS and TARQ…PNTV. Over residues 366–377 the composition is skewed to low complexity; sequence TATSASTPASTS.

This is an uncharacterized protein from Cryphonectria parasitica (Chestnut blight fungus).